A 315-amino-acid chain; its full sequence is MNGRDLALALVSPGDAPRGHRDLACASLKALEEHLIDAVSEHSADGLIGAAVCGAGPEIDGAIALTAGDFTLTQAWLRAVLKTPRVSLLNDFAACALGAPRLAPSAMRLIHEGKPGRNAQIAVIGPNLGLGVAALTPHRTDGWTPVVSEGGHIDFTPGEPREVPVFEALQARHGRVSAEHFLSQQGLADIYAALGGGLDDSDEVILARVRDGDETAREALSIFSALLGAFAGDAALSFAARGGVYINSPLMERIDGLLDQAAFSRRFEDKGRMSAYLKDIPVYLAVGRCTLLGLSALFTASDLRYEAAEVKVLDC.

The protein belongs to the bacterial glucokinase family.

This Caulobacter vibrioides (strain ATCC 19089 / CIP 103742 / CB 15) (Caulobacter crescentus) protein is Glucokinase-like protein CC_3167.